Consider the following 451-residue polypeptide: GABA transporter 1 (451 aa).

A run of 11 helical transmembrane segments spans residues 35–55 (CGFHLTTSIVAPALLSLPYAF), 57–77 (FLGWAAGISCLVGGAAVTFYS), 115–135 (VGPIQMAVCYGVVIANALLGG), 153–173 (LFEFVIIFGCLLLVLAQFPSF), 182–202 (LSLLLCLLYSASAAAASIYIG), 222–242 (VFGIFNAMAIIATTYGNGIIP), 262–282 (MCYLVVIMTFFTVAITGYWAF), 308–328 (FIFLVNLFTVLQLSAVAVVYL), 356–376 (LVVRSLFVVMATIVAAMLPFF), 382–402 (LLGAFGFIPLDFVLPVVFFNF), and 411–431 (FIFWINTVIAVVFSCLGVIAM).

It belongs to the amino acid/polyamine transporter 2 family. Amino acid/auxin permease (AAAP) (TC 2.A.18.2) subfamily. As to expression, highly expressed in flowers and at lower levels in roots, leaves and stems.

The protein resides in the cell membrane. Its function is as follows. High affinity gamma-aminobutyric acid (GABA) transporter probably involved in GABA uptake into cells. When expressed in a heterologous system (Xenopus oocytes), imports GABA, butylamine, beta- and L-Alanine, 5-aminovaleric acid, 6-aminocaproic acid and 8-aminocaprylic acid, but does not mediate the transport of proline or glycine betaine. This chain is GABA transporter 1 (GAT1), found in Arabidopsis thaliana (Mouse-ear cress).